A 55-amino-acid polypeptide reads, in one-letter code: Large ribosomal subunit protein bL33 (55 aa).

It belongs to the bacterial ribosomal protein bL33 family.

This Ruegeria sp. (strain TM1040) (Silicibacter sp.) protein is Large ribosomal subunit protein bL33.